The sequence spans 602 residues: ATP-dependent DNA helicase II subunit 1 (602 aa).

Residues 268–483 (FQCPLILDEK…YDNMKKVTQS (216 aa)) form the Ku domain. Phosphoserine occurs at positions 370, 371, and 372.

This sequence belongs to the ku70 family. As to quaternary structure, heterodimer of YKU70/HDF1 and YKU80/HDF2. Post-translationally, sumoylated by MMS21.

The protein localises to the nucleus. It localises to the chromosome. It is found in the telomere. It catalyses the reaction ATP + H2O = ADP + phosphate + H(+). In terms of biological role, single-stranded DNA-dependent ATP-dependent helicase. Involved in non-homologous end joining (NHEJ) DNA double strand break repair. DNA-binding is sequence-independent but has a high affinity to nicks in double-stranded DNA and to the ends of duplex DNA. Binds to naturally occurring chromosomal ends, and therefore provides chromosomal end protection. Appears to have a role in recruitment of telomerase and CDC13 to the telomere and the subsequent telomere elongation. Required also for telomere recombination to repair telomeric ends in the absence of telomerase. KU70, of the KU70/KU80 heterodimer, binds to the stem loop of TLC1, the RNA component of telomerase. Involved in telomere maintenance. Interacts with telomeric repeats and subtelomeric sequences thereby controlling telomere length and protecting against subtelomeric rearrangement. Maintains telomeric chromatin, which is involved in silencing the expression of genes located at the telomere. Required for mating-type switching. The protein is ATP-dependent DNA helicase II subunit 1 (YKU70) of Saccharomyces cerevisiae (strain ATCC 204508 / S288c) (Baker's yeast).